Here is a 238-residue protein sequence, read N- to C-terminus: Pyridoxine 5'-phosphate synthase (238 aa).

Asparagine 7 lines the 3-amino-2-oxopropyl phosphate pocket. Position 9-10 (9-10) interacts with 1-deoxy-D-xylulose 5-phosphate; the sequence is DH. Arginine 18 provides a ligand contact to 3-amino-2-oxopropyl phosphate. Histidine 43 (proton acceptor) is an active-site residue. 1-deoxy-D-xylulose 5-phosphate-binding residues include arginine 45 and histidine 50. Glutamate 70 serves as the catalytic Proton acceptor. Threonine 100 provides a ligand contact to 1-deoxy-D-xylulose 5-phosphate. The active-site Proton donor is histidine 191. 3-amino-2-oxopropyl phosphate-binding positions include glycine 192 and 213-214; that span reads GH.

This sequence belongs to the PNP synthase family. Homooctamer; tetramer of dimers.

The protein localises to the cytoplasm. It catalyses the reaction 3-amino-2-oxopropyl phosphate + 1-deoxy-D-xylulose 5-phosphate = pyridoxine 5'-phosphate + phosphate + 2 H2O + H(+). The protein operates within cofactor biosynthesis; pyridoxine 5'-phosphate biosynthesis; pyridoxine 5'-phosphate from D-erythrose 4-phosphate: step 5/5. Catalyzes the complicated ring closure reaction between the two acyclic compounds 1-deoxy-D-xylulose-5-phosphate (DXP) and 3-amino-2-oxopropyl phosphate (1-amino-acetone-3-phosphate or AAP) to form pyridoxine 5'-phosphate (PNP) and inorganic phosphate. This Syntrophobacter fumaroxidans (strain DSM 10017 / MPOB) protein is Pyridoxine 5'-phosphate synthase.